A 364-amino-acid polypeptide reads, in one-letter code: Probable cysteine protease RDL4 (364 aa).

An N-terminal signal peptide occupies residues 1-23 (MGSAKSAMLILLVAMVIASCATA). Residues 24 to 136 (IDMSVVSYDD…DRYKTSADDV (113 aa)) constitute a propeptide, activation peptide. The N-linked (GlcNAc...) asparagine glycan is linked to asparagine 87. 3 disulfide bridges follow: cysteine 158/cysteine 199, cysteine 192/cysteine 232, and cysteine 291/cysteine 342. Cysteine 161 is an active-site residue. Catalysis depends on residues histidine 297 and asparagine 317.

Belongs to the peptidase C1 family. In terms of tissue distribution, expressed in inflorescences.

Probable thiol protease. The sequence is that of Probable cysteine protease RDL4 from Arabidopsis thaliana (Mouse-ear cress).